Here is a 203-residue protein sequence, read N- to C-terminus: Peptidyl-tRNA hydrolase (203 aa).

Y26 is a binding site for tRNA. The active-site Proton acceptor is H31. TRNA-binding residues include Y82, N84, and N130.

It belongs to the PTH family. In terms of assembly, monomer.

The protein resides in the cytoplasm. The catalysed reaction is an N-acyl-L-alpha-aminoacyl-tRNA + H2O = an N-acyl-L-amino acid + a tRNA + H(+). Functionally, hydrolyzes ribosome-free peptidyl-tRNAs (with 1 or more amino acids incorporated), which drop off the ribosome during protein synthesis, or as a result of ribosome stalling. Its function is as follows. Catalyzes the release of premature peptidyl moieties from peptidyl-tRNA molecules trapped in stalled 50S ribosomal subunits, and thus maintains levels of free tRNAs and 50S ribosomes. This chain is Peptidyl-tRNA hydrolase, found in Streptomyces avermitilis (strain ATCC 31267 / DSM 46492 / JCM 5070 / NBRC 14893 / NCIMB 12804 / NRRL 8165 / MA-4680).